The primary structure comprises 188 residues: Elongation factor P (188 aa).

It belongs to the elongation factor P family.

The protein resides in the cytoplasm. The protein operates within protein biosynthesis; polypeptide chain elongation. Functionally, involved in peptide bond synthesis. Stimulates efficient translation and peptide-bond synthesis on native or reconstituted 70S ribosomes in vitro. Probably functions indirectly by altering the affinity of the ribosome for aminoacyl-tRNA, thus increasing their reactivity as acceptors for peptidyl transferase. The chain is Elongation factor P from Chlorobium chlorochromatii (strain CaD3).